The chain runs to 328 residues: HTH-type transcriptional regulator MalR (328 aa).

One can recognise an HTH lacI-type domain in the interval 2–57 (PVTIKDVAKAAGVSPSTVTRVIQNKSTISDETKKRVRKAMKELNYHPNLNARSLVS). The H-T-H motif DNA-binding region spans 5 to 24 (IKDVAKAAGVSPSTVTRVIQ). Positions 173-218 (TEYFIKKGCKRIAFIGGSKKLFVTKDRLTGYEQALKHYKLTTDNNR) are inducer binding. The tract at residues 282 to 291 (NLAAYVDINS) is dimerization.

Its function is as follows. Transcriptional repressor of the maltosaccharide utilization operons malxCD and malMP. The protein is HTH-type transcriptional regulator MalR (malR) of Streptococcus pneumoniae serotype 4 (strain ATCC BAA-334 / TIGR4).